A 521-amino-acid chain; its full sequence is Colicin-E1* (521 aa).

Disordered regions lie at residues 26 to 52 (NGNPDGSGSGGGGGTGGSKSESSAAIH) and 127 to 163 (SGCALQKQKKKPVKKRKRAEKSFQEAEQRRKEIEKEQ). A compositionally biased stretch (gly residues) spans 30 to 42 (DGSGSGGGGGTGG). Over residues 133–145 (KQKKKPVKKRKRA) the composition is skewed to basic residues. Positions 146–163 (EKSFQEAEQRRKEIEKEQ) are enriched in basic and acidic residues. A run of 2 helical transmembrane segments spans residues 470 to 486 (AVDAGVSYVVVLLFSVL) and 493 to 509 (IWGIAIVTGILCAFIDK).

Belongs to the channel forming colicin family.

The protein localises to the cell membrane. In terms of biological role, this colicin is a channel-forming colicin. This class of transmembrane toxins depolarize the cytoplasmic membrane, leading to dissipation of cellular energy. Its function is as follows. Colicins are polypeptide toxins produced by and active against E.coli and closely related bacteria. In Shigella sonnei, this protein is Colicin-E1* (cea).